The following is a 388-amino-acid chain: Succinate--CoA ligase [ADP-forming] subunit beta (388 aa).

In terms of domain architecture, ATP-grasp spans 9 to 244 (KQLFARYGLP…QSQEDPREAQ (236 aa)). Residues lysine 46, 53 to 55 (GRG), glutamate 99, threonine 102, and glutamate 107 contribute to the ATP site. Asparagine 199 and aspartate 213 together coordinate Mg(2+). Substrate contacts are provided by residues asparagine 264 and 321-323 (GIV).

This sequence belongs to the succinate/malate CoA ligase beta subunit family. In terms of assembly, heterotetramer of two alpha and two beta subunits. Mg(2+) is required as a cofactor.

The enzyme catalyses succinate + ATP + CoA = succinyl-CoA + ADP + phosphate. It carries out the reaction GTP + succinate + CoA = succinyl-CoA + GDP + phosphate. Its pathway is carbohydrate metabolism; tricarboxylic acid cycle; succinate from succinyl-CoA (ligase route): step 1/1. In terms of biological role, succinyl-CoA synthetase functions in the citric acid cycle (TCA), coupling the hydrolysis of succinyl-CoA to the synthesis of either ATP or GTP and thus represents the only step of substrate-level phosphorylation in the TCA. The beta subunit provides nucleotide specificity of the enzyme and binds the substrate succinate, while the binding sites for coenzyme A and phosphate are found in the alpha subunit. This Salmonella dublin (strain CT_02021853) protein is Succinate--CoA ligase [ADP-forming] subunit beta.